We begin with the raw amino-acid sequence, 346 residues long: Histidinol-phosphate aminotransferase (346 aa).

At Lys209 the chain carries N6-(pyridoxal phosphate)lysine.

Belongs to the class-II pyridoxal-phosphate-dependent aminotransferase family. Histidinol-phosphate aminotransferase subfamily. In terms of assembly, homodimer. Pyridoxal 5'-phosphate is required as a cofactor.

It catalyses the reaction L-histidinol phosphate + 2-oxoglutarate = 3-(imidazol-4-yl)-2-oxopropyl phosphate + L-glutamate. Its pathway is amino-acid biosynthesis; L-histidine biosynthesis; L-histidine from 5-phospho-alpha-D-ribose 1-diphosphate: step 7/9. This is Histidinol-phosphate aminotransferase from Vibrio parahaemolyticus serotype O3:K6 (strain RIMD 2210633).